The sequence spans 463 residues: Eukaryotic translation initiation factor 3 subunit E (463 aa).

Positions 224 to 407 (FNLGENQGCQ…NMLHITRPHA (184 aa)) constitute a PCI domain. The interval 432 to 463 (QSSVGEPRERGERGERGNKGGRGRPRTQEVAA) is disordered. Over residues 437–449 (EPRERGERGERGN) the composition is skewed to basic and acidic residues.

It belongs to the eIF-3 subunit E family. Component of the eukaryotic translation initiation factor 3 (eIF-3) complex.

The protein localises to the cytoplasm. Functionally, component of the eukaryotic translation initiation factor 3 (eIF-3) complex, which is involved in protein synthesis of a specialized repertoire of mRNAs and, together with other initiation factors, stimulates binding of mRNA and methionyl-tRNAi to the 40S ribosome. The eIF-3 complex specifically targets and initiates translation of a subset of mRNAs involved in cell proliferation. The polypeptide is Eukaryotic translation initiation factor 3 subunit E (Cryptococcus neoformans var. neoformans serotype D (strain JEC21 / ATCC MYA-565) (Filobasidiella neoformans)).